The chain runs to 422 residues: 26S proteasome non-ATPase regulatory subunit 11 (422 aa).

A2 is modified (N-acetylalanine). Phosphoserine is present on residues S14 and S23. The PCI domain maps to 224-392 (DWKTAYSYFY…GVLIIFDEPP (169 aa)). A Glycyl lysine isopeptide (Lys-Gly) (interchain with G-Cter in SUMO2) cross-link involves residue K274.

It belongs to the proteasome subunit S9 family. As to quaternary structure, component of the 19S proteasome regulatory particle complex. The 26S proteasome consists of a 20S core particle (CP) and two 19S regulatory subunits (RP). The regulatory particle is made of a lid composed of 9 subunits including PSMD11, a base containing 6 ATPases and few additional components. Post-translationally, phosphorylated by AMPK.

Its subcellular location is the nucleus. It is found in the cytoplasm. It localises to the cytosol. Its function is as follows. Component of the 26S proteasome, a multiprotein complex involved in the ATP-dependent degradation of ubiquitinated proteins. This complex plays a key role in the maintenance of protein homeostasis by removing misfolded or damaged proteins, which could impair cellular functions, and by removing proteins whose functions are no longer required. Therefore, the proteasome participates in numerous cellular processes, including cell cycle progression, apoptosis, or DNA damage repair. In the complex, PSMD11 is required for proteasome assembly. Plays a key role in increased proteasome activity in embryonic stem cells (ESCs): its high expression in ESCs promotes enhanced assembly of the 26S proteasome, followed by higher proteasome activity. In Bos taurus (Bovine), this protein is 26S proteasome non-ATPase regulatory subunit 11 (PSMD11).